The sequence spans 405 residues: MTKNSSTVFTHARIATLEEKAANLGLIEEAALVVKDARIVYAGPENKLPDEYASFEKIDCGNRLITPGLIDCHTHLVHAGNRAHEFELRLQGATYEEVARAGGGIVSSVRNLRAASEDDLVRETLPRLDALIAEGVTTVEVKSGYGLDRDSEIKSLKAARRLGEERDVAIRTTFLGAHALPPEMNGDKAAYIDRVINDMLPAIAEQGLADAVDGFCEGIAFLPDEIARVFDAAKAHDIPVKLHADQLSNLHGAALAASYGALSADHLEYTDADGAAAMASAGTVAVLLPGAYYFIRETQKPPVEAFRAAGTKMALATDNNPGTSPLTSLLLTMNMGATLFRMTVEECIAGVTREAARALGILDQTGTLEIGKDADLAIWDIERPAELVYRIGFNPLWKRVFKGQI.

Residues His-73 and His-75 each coordinate Fe(3+). Zn(2+) is bound by residues His-73 and His-75. 3 residues coordinate 4-imidazolone-5-propanoate: Arg-82, Tyr-145, and His-178. Tyr-145 is an N-formimidoyl-L-glutamate binding site. His-243 is a Fe(3+) binding site. Zn(2+) is bound at residue His-243. 4-imidazolone-5-propanoate is bound at residue Gln-246. Residue Asp-318 coordinates Fe(3+). Asp-318 lines the Zn(2+) pocket. Positions 320 and 322 each coordinate N-formimidoyl-L-glutamate. Thr-323 is a 4-imidazolone-5-propanoate binding site.

The protein belongs to the metallo-dependent hydrolases superfamily. HutI family. Zn(2+) serves as cofactor. It depends on Fe(3+) as a cofactor.

It is found in the cytoplasm. It carries out the reaction 4-imidazolone-5-propanoate + H2O = N-formimidoyl-L-glutamate. It functions in the pathway amino-acid degradation; L-histidine degradation into L-glutamate; N-formimidoyl-L-glutamate from L-histidine: step 3/3. In terms of biological role, catalyzes the hydrolytic cleavage of the carbon-nitrogen bond in imidazolone-5-propanoate to yield N-formimidoyl-L-glutamate. It is the third step in the universal histidine degradation pathway. The protein is Imidazolonepropionase of Brucella abortus (strain S19).